A 210-amino-acid chain; its full sequence is Thiamine-phosphate synthase 2 (210 aa).

4-amino-2-methyl-5-(diphosphooxymethyl)pyrimidine is bound by residues 38 to 42 and aspartate 70; that span reads QLREK. Residues aspartate 71 and glutamate 90 each contribute to the Mg(2+) site. Threonine 109 provides a ligand contact to 4-amino-2-methyl-5-(diphosphooxymethyl)pyrimidine. 135-137 is a 2-[(2R,5Z)-2-carboxy-4-methylthiazol-5(2H)-ylidene]ethyl phosphate binding site; it reads TTT. Residue lysine 138 coordinates 4-amino-2-methyl-5-(diphosphooxymethyl)pyrimidine. Glycine 165 contacts 2-[(2R,5Z)-2-carboxy-4-methylthiazol-5(2H)-ylidene]ethyl phosphate.

The protein belongs to the thiamine-phosphate synthase family. It depends on Mg(2+) as a cofactor.

The enzyme catalyses 2-[(2R,5Z)-2-carboxy-4-methylthiazol-5(2H)-ylidene]ethyl phosphate + 4-amino-2-methyl-5-(diphosphooxymethyl)pyrimidine + 2 H(+) = thiamine phosphate + CO2 + diphosphate. It catalyses the reaction 2-(2-carboxy-4-methylthiazol-5-yl)ethyl phosphate + 4-amino-2-methyl-5-(diphosphooxymethyl)pyrimidine + 2 H(+) = thiamine phosphate + CO2 + diphosphate. It carries out the reaction 4-methyl-5-(2-phosphooxyethyl)-thiazole + 4-amino-2-methyl-5-(diphosphooxymethyl)pyrimidine + H(+) = thiamine phosphate + diphosphate. The protein operates within cofactor biosynthesis; thiamine diphosphate biosynthesis; thiamine phosphate from 4-amino-2-methyl-5-diphosphomethylpyrimidine and 4-methyl-5-(2-phosphoethyl)-thiazole: step 1/1. Functionally, condenses 4-methyl-5-(beta-hydroxyethyl)thiazole monophosphate (THZ-P) and 2-methyl-4-amino-5-hydroxymethyl pyrimidine pyrophosphate (HMP-PP) to form thiamine monophosphate (TMP). This Streptococcus pneumoniae serotype 4 (strain ATCC BAA-334 / TIGR4) protein is Thiamine-phosphate synthase 2.